Reading from the N-terminus, the 167-residue chain is Cell number regulator 3 (167 aa).

Residues Gly-67–Leu-84 form a helical membrane-spanning segment.

Belongs to the cornifelin family. Expressed only in pollen.

The protein localises to the membrane. The polypeptide is Cell number regulator 3 (CNR3) (Zea mays (Maize)).